A 67-amino-acid polypeptide reads, in one-letter code: Large ribosomal subunit protein uL29 (67 aa).

The protein belongs to the universal ribosomal protein uL29 family.

This is Large ribosomal subunit protein uL29 from Clostridioides difficile (strain 630) (Peptoclostridium difficile).